The following is a 156-amino-acid chain: ATP synthase subunit b (156 aa).

The helical transmembrane segment at 12 to 32 threads the bilayer; that stretch reads VAFFIFVLFCMKYVWPPVIAA.

It belongs to the ATPase B chain family. F-type ATPases have 2 components, F(1) - the catalytic core - and F(0) - the membrane proton channel. F(1) has five subunits: alpha(3), beta(3), gamma(1), delta(1), epsilon(1). F(0) has three main subunits: a(1), b(2) and c(10-14). The alpha and beta chains form an alternating ring which encloses part of the gamma chain. F(1) is attached to F(0) by a central stalk formed by the gamma and epsilon chains, while a peripheral stalk is formed by the delta and b chains.

Its subcellular location is the cell inner membrane. Functionally, f(1)F(0) ATP synthase produces ATP from ADP in the presence of a proton or sodium gradient. F-type ATPases consist of two structural domains, F(1) containing the extramembraneous catalytic core and F(0) containing the membrane proton channel, linked together by a central stalk and a peripheral stalk. During catalysis, ATP synthesis in the catalytic domain of F(1) is coupled via a rotary mechanism of the central stalk subunits to proton translocation. Its function is as follows. Component of the F(0) channel, it forms part of the peripheral stalk, linking F(1) to F(0). In Pseudomonas syringae pv. tomato (strain ATCC BAA-871 / DC3000), this protein is ATP synthase subunit b.